We begin with the raw amino-acid sequence, 632 residues long: Pheromone-processing carboxypeptidase kex1 (632 aa).

Residues 1-38 (MLLTTPSSRGSRAQSGIANVSWLALSLLLLFSPTLGSA) form the signal peptide. Topologically, residues 39–523 (KSAADYYVRS…KETEWKAYAK (485 aa)) are lumenal. N-linked (GlcNAc...) asparagine glycosylation is found at Asn119 and Asn126. Catalysis depends on residues Ser190 and Asp390. N-linked (GlcNAc...) asparagine glycosylation is found at Asn441 and Asn449. The active site involves His452. Residues 480–509 (KPADSRIDGEKLPQTSVGGHPNSTAAEQQA) form a disordered region. Residues 492-506 (PQTSVGGHPNSTAAE) show a composition bias toward polar residues. Asn501 is a glycosylation site (N-linked (GlcNAc...) asparagine). The helical transmembrane segment at 524 to 544 (SGEAALIVVIIGVTVWGFFIW) threads the bilayer. Over 545–632 (RSRRRNRGYQ…SSTKPGGAQP (88 aa)) the chain is Cytoplasmic. The tract at residues 574–632 (RSGPADVEAGDFDESELDNLHSPGLEQEHYAVGDDSDEESPNHQPAAPPSSTKPGGAQP) is disordered. A compositionally biased stretch (acidic residues) spans 581–590 (EAGDFDESEL).

This sequence belongs to the peptidase S10 family.

It is found in the golgi apparatus. The protein localises to the trans-Golgi network membrane. It catalyses the reaction Preferential release of a C-terminal arginine or lysine residue.. Protease with a carboxypeptidase B-like function involved in the C-terminal processing of the lysine and arginine residues from protein precursors. Promotes cell fusion and is involved in the programmed cell death. This chain is Pheromone-processing carboxypeptidase kex1 (kex1), found in Aspergillus fumigatus (strain CBS 144.89 / FGSC A1163 / CEA10) (Neosartorya fumigata).